The primary structure comprises 671 residues: DNA ligase (671 aa).

NAD(+) contacts are provided by residues 32–36, 81–82, and E113; these read DAEYD and SL. K115 (N6-AMP-lysine intermediate) is an active-site residue. NAD(+) is bound by residues R136, E173, K290, and K314. Zn(2+) is bound by residues C408, C411, C426, and C432. In terms of domain architecture, BRCT spans 593–671; sequence EIDSPFAGKT…EAEMMRLLGE (79 aa).

The protein belongs to the NAD-dependent DNA ligase family. LigA subfamily. It depends on Mg(2+) as a cofactor. Mn(2+) is required as a cofactor.

It catalyses the reaction NAD(+) + (deoxyribonucleotide)n-3'-hydroxyl + 5'-phospho-(deoxyribonucleotide)m = (deoxyribonucleotide)n+m + AMP + beta-nicotinamide D-nucleotide.. In terms of biological role, DNA ligase that catalyzes the formation of phosphodiester linkages between 5'-phosphoryl and 3'-hydroxyl groups in double-stranded DNA using NAD as a coenzyme and as the energy source for the reaction. It is essential for DNA replication and repair of damaged DNA. This chain is DNA ligase, found in Klebsiella pneumoniae (strain 342).